A 180-amino-acid polypeptide reads, in one-letter code: Large ribosomal subunit protein uL6 (180 aa).

Belongs to the universal ribosomal protein uL6 family. As to quaternary structure, part of the 50S ribosomal subunit.

Its function is as follows. This protein binds to the 23S rRNA, and is important in its secondary structure. It is located near the subunit interface in the base of the L7/L12 stalk, and near the tRNA binding site of the peptidyltransferase center. The protein is Large ribosomal subunit protein uL6 of Borrelia recurrentis (strain A1).